Here is a 210-residue protein sequence, read N- to C-terminus: Rho-related GTP-binding protein RhoD (210 aa).

GTP is bound at residue 24–31 (GDGGCGKT). An Effector region motif is present at residues 46-54 (YTPTVFERY). Residues 71–75 (DTAGQ) and 129–132 (CKTD) contribute to the GTP site. Position 207 is a cysteine methyl ester (Cys-207). The S-geranylgeranyl cysteine moiety is linked to residue Cys-207. Residues 208–210 (VVT) constitute a propeptide, removed in mature form.

It belongs to the small GTPase superfamily. Rho family. Interacts (in GTP-bound form) with DIAPH2 isoform 3, DAPK3, FILIP1 and WHAMM. Interacts with PAK5. Interacts (independent of GTP-loaded status) with ANKFY1. Heart, placenta, liver, skeletal muscle, and pancreas and, with weaker intensity, in several other tissues.

It localises to the cell membrane. The protein localises to the early endosome. Its function is as follows. Involved in endosome dynamics. May coordinate membrane transport with the function of the cytoskeleton. Involved in the internalization and trafficking of activated tyrosine kinase receptors such as PDGFRB. Participates in the reorganization of actin cytoskeleton; the function seems to involve WHAMM and includes regulation of filopodia formation and actin filament bundling. Can modulate the effect of DAPK3 in reorganization of actin cytoskeleton and focal adhesion dissolution. The chain is Rho-related GTP-binding protein RhoD from Homo sapiens (Human).